The primary structure comprises 704 residues: MLGTSTKCSKRDCNYAKENISRIMPTIGLGYKQNFEKKTADTQSSCKLLLVALLESFCKHSDQTPEQSKQMFLYVAHSLQNSGIIDFEFSEELEPIRNAYADSLHNLLSKAFRSTLPMSSTKDSKKSRYSSPDGVLAKTASFLSVLSDGGYEDDVMNVKPSVNVLSNRLNHLPVEALESCFPQTTLESSTFADFCEHKDGTGNLSFSNFDSFPTVQRSRYASDFEELELLGKGGYGSVYKARNKFDGVEYALKKIPLRLRSFSTSSNIFRESRTLARLNHPNVIRFFSSWVELLPSSEKQIEEEPLASADETLSQSADIDNFMFDMDTGLLQHTYPSSVQILFQEDSVADDLTPCYSTKNSTCNLTDLFKKEADQDYAESHDCSSTTSQVDTLGKLAPTKSASEMLLMDSFLSEREEDECSNIPSFDQQPLCLYIQMALCEETLEKHINRRNKHIHGVMSKGLRNCYILLFARILEGVLYLHDAMHLVHRDLKPRNIFLSSGVHSEPCSVCLPNFSDEDNVEVSNAYEPVNQRTLCVVPKIGDFGLVLSQSDNLEEGTNSSAESSFVGTSTYAAPELFSKHMRSVMNNNSSTDIYALGILFFELLYPFNTRMERASAIANLKKGIFPHDFLDSMPEEASLIRSMLSSSNKRPTAAQLLTSNLFHDLVVNELHVYQALLEDAEKRNNNLKAELNILRVLNPNYDC.

Residues 224 to 667 (FEELELLGKG…LTSNLFHDLV (444 aa)) form the Protein kinase domain. Residues 230 to 238 (LGKGGYGSV) and Lys253 contribute to the ATP site. Asp491 functions as the Proton acceptor in the catalytic mechanism.

This sequence belongs to the protein kinase superfamily. Ser/Thr protein kinase family. GCN2 subfamily. In terms of processing, autophosphorylated.

It carries out the reaction L-seryl-[protein] + ATP = O-phospho-L-seryl-[protein] + ADP + H(+). It catalyses the reaction L-threonyl-[protein] + ATP = O-phospho-L-threonyl-[protein] + ADP + H(+). Mediates down-regulation of protein synthesis in response to stress conditions by the phosphorylation of the alpha subunit of eIF-2 (tif211) on 'Ser-52'. Protein synthesis is inhibited at the level of initiation. Activity is inhibited in the presence of heme. The protein is Eukaryotic translation initiation factor 2-alpha kinase 1 (hri1) of Schizosaccharomyces pombe (strain 972 / ATCC 24843) (Fission yeast).